The chain runs to 204 residues: 3-isopropylmalate dehydratase small subunit (204 aa).

The protein belongs to the LeuD family. LeuD type 1 subfamily. Heterodimer of LeuC and LeuD.

It carries out the reaction (2R,3S)-3-isopropylmalate = (2S)-2-isopropylmalate. The protein operates within amino-acid biosynthesis; L-leucine biosynthesis; L-leucine from 3-methyl-2-oxobutanoate: step 2/4. Its function is as follows. Catalyzes the isomerization between 2-isopropylmalate and 3-isopropylmalate, via the formation of 2-isopropylmaleate. The sequence is that of 3-isopropylmalate dehydratase small subunit from Ruthia magnifica subsp. Calyptogena magnifica.